The primary structure comprises 250 residues: Tryptophan synthase alpha chain (250 aa).

Active-site proton acceptor residues include glutamate 31 and aspartate 42.

The protein belongs to the TrpA family. As to quaternary structure, tetramer of two alpha and two beta chains.

The enzyme catalyses (1S,2R)-1-C-(indol-3-yl)glycerol 3-phosphate + L-serine = D-glyceraldehyde 3-phosphate + L-tryptophan + H2O. It functions in the pathway amino-acid biosynthesis; L-tryptophan biosynthesis; L-tryptophan from chorismate: step 5/5. Its function is as follows. The alpha subunit is responsible for the aldol cleavage of indoleglycerol phosphate to indole and glyceraldehyde 3-phosphate. The sequence is that of Tryptophan synthase alpha chain from Staphylococcus carnosus (strain TM300).